Consider the following 367-residue polypeptide: Peptide chain release factor 2 (367 aa).

Q254 bears the N5-methylglutamine mark.

The protein belongs to the prokaryotic/mitochondrial release factor family. Methylated by PrmC. Methylation increases the termination efficiency of RF2.

The protein resides in the cytoplasm. Functionally, peptide chain release factor 2 directs the termination of translation in response to the peptide chain termination codons UGA and UAA. This is Peptide chain release factor 2 from Leptospira interrogans serogroup Icterohaemorrhagiae serovar copenhageni (strain Fiocruz L1-130).